The sequence spans 131 residues: Small ribosomal subunit protein uS11 (131 aa).

It belongs to the universal ribosomal protein uS11 family. Part of the 30S ribosomal subunit. Interacts with proteins S7 and S18. Binds to IF-3.

In terms of biological role, located on the platform of the 30S subunit, it bridges several disparate RNA helices of the 16S rRNA. Forms part of the Shine-Dalgarno cleft in the 70S ribosome. The polypeptide is Small ribosomal subunit protein uS11 (Wigglesworthia glossinidia brevipalpis).